Reading from the N-terminus, the 426-residue chain is Proline--tRNA ligase (426 aa).

It belongs to the class-II aminoacyl-tRNA synthetase family. ProS type 2 subfamily. Homodimer.

The protein resides in the cytoplasm. It carries out the reaction tRNA(Pro) + L-proline + ATP = L-prolyl-tRNA(Pro) + AMP + diphosphate. Functionally, catalyzes the attachment of proline to tRNA(Pro) in a two-step reaction: proline is first activated by ATP to form Pro-AMP and then transferred to the acceptor end of tRNA(Pro). This chain is Proline--tRNA ligase, found in Rickettsia africae (strain ESF-5).